The sequence spans 573 residues: 2-succinyl-5-enolpyruvyl-6-hydroxy-3-cyclohexene-1-carboxylate synthase (573 aa).

It belongs to the TPP enzyme family. MenD subfamily. In terms of assembly, homodimer. The cofactor is Mg(2+). Mn(2+) serves as cofactor. Requires thiamine diphosphate as cofactor.

It catalyses the reaction isochorismate + 2-oxoglutarate + H(+) = 5-enolpyruvoyl-6-hydroxy-2-succinyl-cyclohex-3-ene-1-carboxylate + CO2. Its pathway is quinol/quinone metabolism; 1,4-dihydroxy-2-naphthoate biosynthesis; 1,4-dihydroxy-2-naphthoate from chorismate: step 2/7. It participates in quinol/quinone metabolism; menaquinone biosynthesis. Catalyzes the thiamine diphosphate-dependent decarboxylation of 2-oxoglutarate and the subsequent addition of the resulting succinic semialdehyde-thiamine pyrophosphate anion to isochorismate to yield 2-succinyl-5-enolpyruvyl-6-hydroxy-3-cyclohexene-1-carboxylate (SEPHCHC). The protein is 2-succinyl-5-enolpyruvyl-6-hydroxy-3-cyclohexene-1-carboxylate synthase of Shewanella oneidensis (strain ATCC 700550 / JCM 31522 / CIP 106686 / LMG 19005 / NCIMB 14063 / MR-1).